The primary structure comprises 152 residues: Nucleoside diphosphate kinase A (152 aa).

ATP contacts are provided by K12, F60, R88, and T94. K100 is covalently cross-linked (Glycyl lysine isopeptide (Lys-Gly) (interchain with G-Cter in ubiquitin)). R105 and N115 together coordinate ATP. Catalysis depends on H118, which acts as the Pros-phosphohistidine intermediate. 2 positions are modified to phosphoserine: S120 and S122. At K124 the chain carries N6-acetyllysine. S125 is subject to Phosphoserine.

This sequence belongs to the NDK family. As to quaternary structure, hexamer of two different chains: An and B (A6, A5B, A4B2, A3B3, A2B4, AB5, B6). Interacts with PRUNE1. Component of the SET complex, composed of at least ANP32A, APEX1, HMGB2, NME1, SET and TREX1. Within this complex, interacts directly with SET. Also interacts with TREX1, but only following translocation to the nucleus. Mg(2+) serves as cofactor.

The protein resides in the cytoplasm. It is found in the nucleus. The catalysed reaction is a 2'-deoxyribonucleoside 5'-diphosphate + ATP = a 2'-deoxyribonucleoside 5'-triphosphate + ADP. It carries out the reaction a ribonucleoside 5'-diphosphate + ATP = a ribonucleoside 5'-triphosphate + ADP. With respect to regulation, autophosphorylation at His-118 increases serine/threonine protein kinase activity of the enzyme. Interaction with the SET complex inhibits exonuclease activity. Its function is as follows. Major role in the synthesis of nucleoside triphosphates other than ATP. The ATP gamma phosphate is transferred to the NDP beta phosphate via a ping-pong mechanism, using a phosphorylated active-site intermediate. Possesses nucleoside-diphosphate kinase, serine/threonine-specific protein kinase, geranyl and farnesyl pyrophosphate kinase, histidine protein kinase and 3'-5' exonuclease activities. Involved in cell proliferation, differentiation and development, signal transduction, G protein-coupled receptor endocytosis, and gene expression. Required for neural development including neural patterning and cell fate determination. During GZMA-mediated cell death, works in concert with TREX1. NME1 nicks one strand of DNA and TREX1 removes bases from the free 3' end to enhance DNA damage and prevent DNA end reannealing and rapid repair. In Mus musculus (Mouse), this protein is Nucleoside diphosphate kinase A (Nme1).